The primary structure comprises 216 residues: Pyridoxine/pyridoxamine 5'-phosphate oxidase (216 aa).

FMN contacts are provided by residues 64–69, 79–80, K85, K86, and Q108; these read RVVLLK and FT. K69 contacts substrate. Substrate is bound by residues Y126, R130, and S134. Residues 143-144 and W188 contribute to the FMN site; that span reads QS. Residue 194 to 196 coordinates substrate; it reads RKH. R198 lines the FMN pocket.

It belongs to the pyridoxamine 5'-phosphate oxidase family. In terms of assembly, homodimer. FMN is required as a cofactor.

The enzyme catalyses pyridoxamine 5'-phosphate + O2 + H2O = pyridoxal 5'-phosphate + H2O2 + NH4(+). The catalysed reaction is pyridoxine 5'-phosphate + O2 = pyridoxal 5'-phosphate + H2O2. It functions in the pathway cofactor metabolism; pyridoxal 5'-phosphate salvage; pyridoxal 5'-phosphate from pyridoxamine 5'-phosphate: step 1/1. Its pathway is cofactor metabolism; pyridoxal 5'-phosphate salvage; pyridoxal 5'-phosphate from pyridoxine 5'-phosphate: step 1/1. In terms of biological role, catalyzes the oxidation of either pyridoxine 5'-phosphate (PNP) or pyridoxamine 5'-phosphate (PMP) into pyridoxal 5'-phosphate (PLP). In Wolbachia pipientis wMel, this protein is Pyridoxine/pyridoxamine 5'-phosphate oxidase.